We begin with the raw amino-acid sequence, 201 residues long: ATP-dependent Clp protease proteolytic subunit (201 aa).

Catalysis depends on Ser-101, which acts as the Nucleophile. The active site involves His-126.

Belongs to the peptidase S14 family. Component of the chloroplastic Clp protease core complex.

The protein resides in the plastid. Its subcellular location is the chloroplast stroma. It carries out the reaction Hydrolysis of proteins to small peptides in the presence of ATP and magnesium. alpha-casein is the usual test substrate. In the absence of ATP, only oligopeptides shorter than five residues are hydrolyzed (such as succinyl-Leu-Tyr-|-NHMec, and Leu-Tyr-Leu-|-Tyr-Trp, in which cleavage of the -Tyr-|-Leu- and -Tyr-|-Trp bonds also occurs).. Cleaves peptides in various proteins in a process that requires ATP hydrolysis. Has a chymotrypsin-like activity. Plays a major role in the degradation of misfolded proteins. The polypeptide is ATP-dependent Clp protease proteolytic subunit (Chaetosphaeridium globosum (Charophycean green alga)).